A 129-amino-acid polypeptide reads, in one-letter code: Snaclec coagulation factor IX/factor X-binding protein subunit B3 (129 aa).

An N-terminal signal peptide occupies residues 1–8; it reads LSLSGTAA. Cystine bridges form between cysteine 10–cysteine 21, cysteine 38–cysteine 127, and cysteine 104–cysteine 119. Residues 17 to 128 form the C-type lectin domain; the sequence is YEGHCYKPFN…CRMMANFVCE (112 aa).

This sequence belongs to the snaclec family. As to quaternary structure, heterodimer of subunits A and B3; disulfide-linked. Expressed by the venom gland.

The protein localises to the secreted. In terms of biological role, anticoagulant protein which binds to the gamma-carboxyglutamic acid-domain regions of factors IX (F9) and factor X (F10) in the presence of calcium with a 1 to 1 stoichiometry. The polypeptide is Snaclec coagulation factor IX/factor X-binding protein subunit B3 (Trimeresurus stejnegeri (Chinese green tree viper)).